The primary structure comprises 613 residues: Transcription factor Sp2 (613 aa).

Residues 1–32 (MSDPQTSMAATAAVSPSDYLQPAASTTQDSQP) form a disordered region. The span at 23-32 (AASTTQDSQP) shows a compositional bias: polar residues. Phosphoserine is present on serine 78. The segment covering 225–235 (TGAPTQLLTES) has biased composition (polar residues). Positions 225–258 (TGAPTQLLTESPPTPLSKTNKKARKKSLPASQPP) are disordered. Positions 361–369 (GEVQTVLVQ) match the 9aaTAD; inactive motif. The segment covering 372-389 (PPATAAATSNTTCSSPAS) has biased composition (low complexity). Residues 372-404 (PPATAAATSNTTCSSPASRAPHLSGTSKKHSAA) form a disordered region. C2H2-type zinc fingers lie at residues 525–549 (HVCHIPDCGKTFRKTSLLRAHVRLH), 555–579 (FVCNWFFCGKRFTRSDELQRHARTH), and 585–607 (FECAQCQKRFMRSDHLTKHYKTH).

The protein belongs to the Sp1 C2H2-type zinc-finger protein family.

Its subcellular location is the nucleus. Its function is as follows. Binds to GC box promoters elements and selectively activates mRNA synthesis from genes that contain functional recognition sites. This is Transcription factor Sp2 (SP2) from Homo sapiens (Human).